A 328-amino-acid chain; its full sequence is Arabinose 5-phosphate isomerase KdsD (328 aa).

The region spanning 42–184 (CEKMFWCKGK…AVALLKARGF (143 aa)) is the SIS domain. Substrate contacts are provided by residues 75 to 76 (GT), histidine 82, histidine 88, 114 to 123 (ALIPVLKRLH), 148 to 150 (KVA), threonine 222, and aspartate 275. Histidine 82 lines the Zn(2+) pocket. Residues 210 to 268 (MHTGDEIPHVKKTASLRDALLEVTRKNLGMTVICDDNMMIEGIFTDGDLRRVFDMGVDV) form the CBS 1 domain. One can recognise a CBS 2 domain in the interval 277-328 (MTPGGIRVRPGILAVEALNLMQSRHITSVMVADGDHLLGVLHMHDLLRAGVV).

This sequence belongs to the SIS family. GutQ/KpsF subfamily. Homotetramer.

The catalysed reaction is D-arabinose 5-phosphate = D-ribulose 5-phosphate. It participates in carbohydrate biosynthesis; 3-deoxy-D-manno-octulosonate biosynthesis; 3-deoxy-D-manno-octulosonate from D-ribulose 5-phosphate: step 1/3. The protein operates within bacterial outer membrane biogenesis; lipopolysaccharide biosynthesis. Involved in the biosynthesis of 3-deoxy-D-manno-octulosonate (KDO), a unique 8-carbon sugar component of lipopolysaccharides (LPSs). Catalyzes the reversible aldol-ketol isomerization between D-ribulose 5-phosphate (Ru5P) and D-arabinose 5-phosphate (A5P). The polypeptide is Arabinose 5-phosphate isomerase KdsD (kdsD) (Escherichia coli O157:H7).